An 87-amino-acid polypeptide reads, in one-letter code: DNA-directed RNA polymerase subunit omega (87 aa).

It belongs to the RNA polymerase subunit omega family. In terms of assembly, the RNAP catalytic core consists of 2 alpha, 1 beta, 1 beta' and 1 omega subunit. When a sigma factor is associated with the core the holoenzyme is formed, which can initiate transcription.

The enzyme catalyses RNA(n) + a ribonucleoside 5'-triphosphate = RNA(n+1) + diphosphate. In terms of biological role, promotes RNA polymerase assembly. Latches the N- and C-terminal regions of the beta' subunit thereby facilitating its interaction with the beta and alpha subunits. The protein is DNA-directed RNA polymerase subunit omega of Azotobacter vinelandii (strain DJ / ATCC BAA-1303).